Consider the following 259-residue polypeptide: Global transcriptional regulator CodY (259 aa).

A GAF domain region spans residues 1–155; it reads MNLLEKTRKI…GATVVGMEIL (155 aa). Positions 203–222 form a DNA-binding region, H-T-H motif; the sequence is ASKIADRVGITRSVIVNALR. The residue at position 215 (Ser215) is a Phosphoserine.

Belongs to the CodY family.

The protein localises to the cytoplasm. DNA-binding global transcriptional regulator which is involved in the adaptive response to starvation and acts by directly or indirectly controlling the expression of numerous genes in response to nutrient availability. During rapid exponential growth, CodY is highly active and represses genes whose products allow adaptation to nutrient depletion. This chain is Global transcriptional regulator CodY, found in Lysinibacillus sphaericus (strain C3-41).